The sequence spans 221 residues: Epididymal secretory glutathione peroxidase (221 aa).

An N-terminal signal peptide occupies residues 1–21 (MTTQLRVVHLLPLLLACFVQT). Cys73 is a catalytic residue.

This sequence belongs to the glutathione peroxidase family. In terms of tissue distribution, epididymis.

It is found in the secreted. It catalyses the reaction 2 glutathione + H2O2 = glutathione disulfide + 2 H2O. Functionally, protects cells and enzymes from oxidative damage, by catalyzing the reduction of hydrogen peroxide, lipid peroxides and organic hydroperoxide, by glutathione. May constitute a glutathione peroxidase-like protective system against peroxide damage in sperm membrane lipids. The polypeptide is Epididymal secretory glutathione peroxidase (GPX5) (Macaca fascicularis (Crab-eating macaque)).